Reading from the N-terminus, the 342-residue chain is Aristolochene synthase (342 aa).

Residues aspartate 115, asparagine 244, serine 248, and glutamate 252 each coordinate Mg(2+). Residues arginine 340 and tyrosine 341 each coordinate (2E,6E)-farnesyl diphosphate.

It belongs to the terpene synthase family. In terms of assembly, homodimer. It depends on Mg(2+) as a cofactor.

It carries out the reaction (2E,6E)-farnesyl diphosphate = (+)-aristolochene + diphosphate. The protein operates within sesquiterpene biosynthesis; aristolochene biosynthesis; aristolochene from farnesyl diphosphate: step 1/1. Functionally, aristolochene synthase; part of the gene cluster that mediates the biosynthesis of PR-toxin, a bicyclic sesquiterpene belonging to the eremophilane class and acting as a mycotoxin. The first step of the pathway is catalyzed by the aristolochene synthase which performs the cyclization of trans,trans-farnesyl diphosphate (FPP) to the bicyclic sesquiterpene aristolochene. Following the formation of aristolochene, the non-oxygenated aristolochene is converted to the trioxygenated intermediate eremofortin B, via 7-epi-neopetasone. This conversion appears to involve three enzymes, a hydroxysterol oxidase-like enzyme, the quinone-oxidase prx3 that forms the quinone-type-structure in the bicyclic nucleus of aristolochene with the C8-oxo group and the C-3 hydroxyl group, and the P450 monooxygenase ORF6 that introduces the epoxide at the double bond between carbons 1 and 2. No monoxy or dioxy-intermediates have been reported to be released to the broth, so these three early oxidative reactions may be coupled together. Eremofortin B is further oxidized by another P450 monooxygenase, that introduces a second epoxide between carbons 7 and 11 prior to acetylation to eremofortin A by the acetyltransferase ORF8. The second epoxidation may be performed by a second P450 monooxygenase. After the acetylation step, eremofortin A is converted to eremofortin C and then to PR-toxin. First the conversion of eremofortin A to eremofortin C proceeds by oxidation of the side chain of the molecule at C-12 and is catalyzed by the short-chain oxidoreductase prx1. The cytochrome P450 monooxygenase ORF5 also plays a role in this step. The primary alcohol formed at C-12 is finally oxidized by the short-chain alcohol dehydrogenase prx4 that forms PR-toxin. The polypeptide is Aristolochene synthase (Penicillium roqueforti (strain FM164)).